We begin with the raw amino-acid sequence, 185 residues long: Elongation factor P (185 aa).

The protein belongs to the elongation factor P family.

Its subcellular location is the cytoplasm. It participates in protein biosynthesis; polypeptide chain elongation. Involved in peptide bond synthesis. Stimulates efficient translation and peptide-bond synthesis on native or reconstituted 70S ribosomes in vitro. Probably functions indirectly by altering the affinity of the ribosome for aminoacyl-tRNA, thus increasing their reactivity as acceptors for peptidyl transferase. In Salinispora tropica (strain ATCC BAA-916 / DSM 44818 / JCM 13857 / NBRC 105044 / CNB-440), this protein is Elongation factor P.